Here is a 936-residue protein sequence, read N- to C-terminus: F-box protein dre-1 (936 aa).

Residues 1–67 (MSSSSSPFFH…GSSEADNPTL (67 aa)) form a disordered region. Residues 22–36 (QQSPSYSQNSNSPSQ) show a composition bias toward low complexity. Over residues 48-63 (GSTSMRYSPSGSSEAD) the composition is skewed to polar residues. The region spanning 159–205 (QDHINRLPEELLLKVFSFLPDKSLLACSSVSYRFNQISNSHEVWKEL) is the F-box domain. PbH1 repeat units lie at residues 405–427 (SAAP…YITD), 428–450 (NATG…WVKN), 451–473 (HANP…FTFE), 474–496 (HGQG…EVKN), 497–519 (SANP…YVHE), 520–542 (RGRG…WITS), 543–565 (HSDP…YIFG), 566–588 (EGRG…QIRS), 589–611 (QSDP…YVHE), 612–634 (KGRG…WVTT), 635–657 (GSSP…YFYD), 658–680 (QGHG…QIRT), 681–703 (GSNP…LVYN), 704–726 (GGKG…WIKT), 727–749 (DSEP…CIFN), 750–772 (RGKG…LIST), 773–795 (ESNP…EITN), and 796–818 (GATA…CVAT). A UBR-type zinc finger spans residues 843 to 914 (GLCLFKVSSN…LERHCHLQNV (72 aa)).

In terms of assembly, component of a SCF ubiquitin ligase complex. Interacts (via F-box) with skr-1. Interacts with blmp-1; the interaction targets blmp-1 for proteasomal degradation. Interacts with ced-9; the interaction inhibits ced-9 activity, either directly or indirectly. In terms of tissue distribution, in mid-embryogenesis, expression is most prominent in epidermal and intestinal cells. By the 1.5-fold stage of embryogenesis, expression is additionally detected in neurons and other cells. During larval and adult stages, highest expression is seen in epidermal seam cells and hypodermis. In larvae, strongly expressed in the P epidermal blast cells and descendents that give rise to the vulva and weakly expressed in the somatic gonad, including the gonadoblasts, the anchor cell and the distal tip cells. Some weak expression also seen in adult spermatheca and uterus. In the musculature, expressed in the pharynx, anal depressor, sex muscles, and body wall muscles. Detected in neurons of the head, tail, ventral cord and periphery. Also expressed in the embryonic tail spike cell.

The protein localises to the nucleus. The protein resides in the cytoplasm. The protein operates within protein modification; protein ubiquitination. In terms of biological role, substrate recognition component of a SCF (SKP1-CUL1-F-box protein) E3 ubiquitin-protein ligase complex which mediates the ubiquitination and subsequent proteasomal degradation of target proteins including blmp-1. Promotes ubiquitination of snail family proteins ces-1, scrt-1 and snai-1. Heterochronic protein which is required for the timing of gonad development and epidermal seam cell differentiation. Regulates tail-spike cell death through inhibition of the apoptosis regulator ced-9. This Caenorhabditis elegans protein is F-box protein dre-1.